The sequence spans 206 residues: 2,3-bisphosphoglycerate-dependent phosphoglycerate mutase (206 aa).

Substrate-binding positions include 9 to 16, 22 to 23, R61, 88 to 91, K99, 115 to 116, and 159 to 160; these read RHGQSEWN, TG, ERDY, RR, and GN. The active-site Tele-phosphohistidine intermediate is H10. The Proton donor/acceptor role is filled by E88.

This sequence belongs to the phosphoglycerate mutase family. BPG-dependent PGAM subfamily. Homodimer.

The enzyme catalyses (2R)-2-phosphoglycerate = (2R)-3-phosphoglycerate. It functions in the pathway carbohydrate degradation; glycolysis; pyruvate from D-glyceraldehyde 3-phosphate: step 3/5. Catalyzes the interconversion of 2-phosphoglycerate and 3-phosphoglycerate. The sequence is that of 2,3-bisphosphoglycerate-dependent phosphoglycerate mutase from Methylocella silvestris (strain DSM 15510 / CIP 108128 / LMG 27833 / NCIMB 13906 / BL2).